We begin with the raw amino-acid sequence, 254 residues long: K88 minor fimbrial subunit FaeI (254 aa).

The first 20 residues, 1-20 (MKKVTLFLFVVSLLPSTVLA), serve as a signal peptide directing secretion.

The protein belongs to the fimbrial K88 protein family.

The protein localises to the fimbrium. K88 minor fimbrial subunit, plays an essential role in the biogenesis of the K88 fimbriae. Fimbriae (also called pili), are polar filaments radiating from the surface of the bacterium to a length of 0.5-1.5 micrometers and numbering 100-300 per cell. They enable bacteria to colonize the epithelium of specific host organs. This chain is K88 minor fimbrial subunit FaeI (faeI), found in Escherichia coli.